An 836-amino-acid polypeptide reads, in one-letter code: Serine/threonine-protein kinase ppk5 (836 aa).

4 disordered regions span residues 1–29 (MVGLISTSETLPKQESKSSSAPVSNFLSP), 192–214 (INQLDETPGGTNYPMNKKKTLSS), 230–307 (CSQF…YKSI), and 328–381 (TPLD…ERQN). Polar residues-rich tracts occupy residues 192–205 (INQLDETPGGTNYP), 232–241 (QFASPRSSIV), and 265–288 (KPSNFNNNIQSSSYGHASQSTKLT). Basic and acidic residues predominate over residues 289–298 (SQRDNDHQKD). The segment covering 338–347 (SGKKFNKNSK) has biased composition (basic residues). The segment covering 353–362 (STISSYSSAS) has biased composition (low complexity). One can recognise a Protein kinase domain in the interval 518–814 (YEIIDTVGKG…VDSALQHEFI (297 aa)). ATP-binding positions include 524–532 (VGKGSFGQV) and Lys547. Asp644 serves as the catalytic Proton acceptor. Phosphotyrosine is present on Tyr678.

It belongs to the protein kinase superfamily. CMGC Ser/Thr protein kinase family. MNB/DYRK subfamily.

The protein localises to the cytoplasm. It catalyses the reaction L-seryl-[protein] + ATP = O-phospho-L-seryl-[protein] + ADP + H(+). The enzyme catalyses L-threonyl-[protein] + ATP = O-phospho-L-threonyl-[protein] + ADP + H(+). Functionally, has a role in meiosis. The sequence is that of Serine/threonine-protein kinase ppk5 (ppk5) from Schizosaccharomyces pombe (strain 972 / ATCC 24843) (Fission yeast).